The chain runs to 186 residues: Potassium-transporting ATPase KdpC subunit (186 aa).

Residues Leu-10–Gly-30 traverse the membrane as a helical segment.

Belongs to the KdpC family. As to quaternary structure, the system is composed of three essential subunits: KdpA, KdpB and KdpC.

It localises to the cell membrane. Part of the high-affinity ATP-driven potassium transport (or Kdp) system, which catalyzes the hydrolysis of ATP coupled with the electrogenic transport of potassium into the cytoplasm. This subunit acts as a catalytic chaperone that increases the ATP-binding affinity of the ATP-hydrolyzing subunit KdpB by the formation of a transient KdpB/KdpC/ATP ternary complex. This chain is Potassium-transporting ATPase KdpC subunit, found in Staphylococcus aureus (strain MSSA476).